The sequence spans 221 residues: Deoxyribose-phosphate aldolase (221 aa).

Residue D90 is the Proton donor/acceptor of the active site. K152 serves as the catalytic Schiff-base intermediate with acetaldehyde. Residue K181 is the Proton donor/acceptor of the active site.

This sequence belongs to the DeoC/FbaB aldolase family. DeoC type 1 subfamily.

Its subcellular location is the cytoplasm. It catalyses the reaction 2-deoxy-D-ribose 5-phosphate = D-glyceraldehyde 3-phosphate + acetaldehyde. It functions in the pathway carbohydrate degradation; 2-deoxy-D-ribose 1-phosphate degradation; D-glyceraldehyde 3-phosphate and acetaldehyde from 2-deoxy-alpha-D-ribose 1-phosphate: step 2/2. Functionally, catalyzes a reversible aldol reaction between acetaldehyde and D-glyceraldehyde 3-phosphate to generate 2-deoxy-D-ribose 5-phosphate. The chain is Deoxyribose-phosphate aldolase from Exiguobacterium sp. (strain ATCC BAA-1283 / AT1b).